A 318-amino-acid polypeptide reads, in one-letter code: MPRLLSGDDIRRRPEASEMLDSLLATGGLVLLRDSVEWEGRGLLKALIKKSALRGEQVHVLGCEVSEEEFREGLGSDVNSRLVYHDLFRDPLNWSQPGEAAPEGPLKALRSMCRRTDRGSVTIALDSLSWLLCHIPCVTLCQALHALSQRNVDPGDNPLIEQVRVLGLLHEELHGPGPVGAVSSLAHTEVTLSGKMDQTSASILCRRPQQRATYQTWWFSILPDFSLDLHEGLPLHSELHRDPHTTQVDPASHLTFNLHLSKKEREAKDSLTLPFQFSSEKQQALLHPVPGQTTGRIFYEPDAFDDVDQEDPDDDLDI.

The residue at position 270 (Ser-270) is a Phosphoserine.

The protein belongs to the ELP5 family. In terms of assembly, component of the elongator complex which consists of ELP1, ELP2, ELP3, ELP4, ELP5 and ELP6; in the complex, is required for optimal binding of ELP3 to ELP4. Tyrosine-phosphorylated.

The protein resides in the nucleus. It localises to the cytoplasm. Its pathway is tRNA modification; 5-methoxycarbonylmethyl-2-thiouridine-tRNA biosynthesis. Functionally, component of the elongator complex which is required for multiple tRNA modifications, including mcm5U (5-methoxycarbonylmethyl uridine), mcm5s2U (5-methoxycarbonylmethyl-2-thiouridine), and ncm5U (5-carbamoylmethyl uridine). The elongator complex catalyzes the formation of carboxymethyluridine in the wobble base at position 34 in tRNAs. Involved in cell migration. The polypeptide is Elongator complex protein 5 (Elp5) (Rattus norvegicus (Rat)).